A 59-amino-acid chain; its full sequence is Photosystem II reaction center protein K (59 aa).

Positions 1–22 are excised as a propeptide; it reads MLNIFSLICLNSALYPSSLFFA. A helical membrane pass occupies residues 38–58; it reads MPVIPLFFFLLAFVWQAAVSF.

It belongs to the PsbK family. PSII is composed of 1 copy each of membrane proteins PsbA, PsbB, PsbC, PsbD, PsbE, PsbF, PsbH, PsbI, PsbJ, PsbK, PsbL, PsbM, PsbT, PsbX, PsbY, PsbZ, Psb30/Ycf12, at least 3 peripheral proteins of the oxygen-evolving complex and a large number of cofactors. It forms dimeric complexes.

The protein localises to the plastid. Its subcellular location is the chloroplast thylakoid membrane. Its function is as follows. One of the components of the core complex of photosystem II (PSII). PSII is a light-driven water:plastoquinone oxidoreductase that uses light energy to abstract electrons from H(2)O, generating O(2) and a proton gradient subsequently used for ATP formation. It consists of a core antenna complex that captures photons, and an electron transfer chain that converts photonic excitation into a charge separation. This chain is Photosystem II reaction center protein K, found in Lactuca sativa (Garden lettuce).